A 258-amino-acid polypeptide reads, in one-letter code: Type III pantothenate kinase (258 aa).

6 to 13 is a binding site for ATP; that stretch reads DVGNTNTV. Residues tyrosine 100 and 107–110 contribute to the substrate site; that span reads GADR. The Proton acceptor role is filled by aspartate 109. Aspartate 129 contributes to the K(+) binding site. Threonine 132 lines the ATP pocket. Threonine 184 lines the substrate pocket.

The protein belongs to the type III pantothenate kinase family. As to quaternary structure, homodimer. It depends on NH4(+) as a cofactor. K(+) is required as a cofactor.

It localises to the cytoplasm. It catalyses the reaction (R)-pantothenate + ATP = (R)-4'-phosphopantothenate + ADP + H(+). It functions in the pathway cofactor biosynthesis; coenzyme A biosynthesis; CoA from (R)-pantothenate: step 1/5. In terms of biological role, catalyzes the phosphorylation of pantothenate (Pan), the first step in CoA biosynthesis. This chain is Type III pantothenate kinase, found in Bacillus velezensis (strain DSM 23117 / BGSC 10A6 / LMG 26770 / FZB42) (Bacillus amyloliquefaciens subsp. plantarum).